The chain runs to 491 residues: Cytochrome P450 2F5 (491 aa).

Cys436 lines the heme pocket.

The protein belongs to the cytochrome P450 family. Requires heme as cofactor.

It localises to the endoplasmic reticulum membrane. The protein localises to the microsome membrane. The enzyme catalyses an organic molecule + reduced [NADPH--hemoprotein reductase] + O2 = an alcohol + oxidized [NADPH--hemoprotein reductase] + H2O + H(+). Its function is as follows. Cytochromes P450 are a group of heme-thiolate monooxygenases. In liver microsomes, this enzyme is involved in an NADPH-dependent electron transport pathway. It oxidizes a variety of structurally unrelated compounds, including steroids, fatty acids, and xenobiotics. This chain is Cytochrome P450 2F5 (CYP2F5), found in Gorilla gorilla gorilla (Western lowland gorilla).